Here is a 393-residue protein sequence, read N- to C-terminus: tRNA(Met) cytidine acetate ligase (393 aa).

Residues Gly-81, Asn-142, and Arg-167 each contribute to the ATP site.

It belongs to the TmcAL family.

It localises to the cytoplasm. The catalysed reaction is cytidine(34) in elongator tRNA(Met) + acetate + ATP = N(4)-acetylcytidine(34) in elongator tRNA(Met) + AMP + diphosphate. Catalyzes the formation of N(4)-acetylcytidine (ac(4)C) at the wobble position of elongator tRNA(Met), using acetate and ATP as substrates. First activates an acetate ion to form acetyladenylate (Ac-AMP) and then transfers the acetyl group to tRNA to form ac(4)C34. In Bacillus cereus (strain 03BB102), this protein is tRNA(Met) cytidine acetate ligase.